A 297-amino-acid polypeptide reads, in one-letter code: Indole-3-glycerol phosphate synthase (297 aa).

Belongs to the TrpC family.

It carries out the reaction 1-(2-carboxyphenylamino)-1-deoxy-D-ribulose 5-phosphate + H(+) = (1S,2R)-1-C-(indol-3-yl)glycerol 3-phosphate + CO2 + H2O. Its pathway is amino-acid biosynthesis; L-tryptophan biosynthesis; L-tryptophan from chorismate: step 4/5. The chain is Indole-3-glycerol phosphate synthase from Trichodesmium erythraeum (strain IMS101).